Here is a 130-residue protein sequence, read N- to C-terminus: Small ribosomal subunit protein uS11 (130 aa).

The protein belongs to the universal ribosomal protein uS11 family. Part of the 30S ribosomal subunit. Interacts with proteins S7 and S18. Binds to IF-3.

Its function is as follows. Located on the platform of the 30S subunit, it bridges several disparate RNA helices of the 16S rRNA. Forms part of the Shine-Dalgarno cleft in the 70S ribosome. The chain is Small ribosomal subunit protein uS11 from Campylobacter hominis (strain ATCC BAA-381 / DSM 21671 / CCUG 45161 / LMG 19568 / NCTC 13146 / CH001A).